Here is a 170-residue protein sequence, read N- to C-terminus: MEGADDIVPMGEVVGLHGVRGWVKVYSHTEPREAILDYPHWYLRRDDGDWVPVERTAGRCQGKGLVAAFRDVEDRDRARAYIGLQIGVPRRDLPELPEGQYYWADLEGLAAYTTGGEPLGRVSHLFATGANDVLVLQGDRERLVPFVYGQTVRRVDLTAGRIELDWDPDF.

The PRC barrel domain occupies glutamate 98–phenylalanine 170.

It belongs to the RimM family. As to quaternary structure, binds ribosomal protein uS19.

It localises to the cytoplasm. Functionally, an accessory protein needed during the final step in the assembly of 30S ribosomal subunit, possibly for assembly of the head region. Essential for efficient processing of 16S rRNA. May be needed both before and after RbfA during the maturation of 16S rRNA. It has affinity for free ribosomal 30S subunits but not for 70S ribosomes. In Alkalilimnicola ehrlichii (strain ATCC BAA-1101 / DSM 17681 / MLHE-1), this protein is Ribosome maturation factor RimM.